Consider the following 685-residue polypeptide: DNA ligase (685 aa).

Residues 47 to 51 (DSEYD), 96 to 97 (SL), and E125 each bind NAD(+). Catalysis depends on K127, which acts as the N6-AMP-lysine intermediate. NAD(+)-binding residues include R148, E185, K304, and K328. Zn(2+) contacts are provided by C422, C425, C440, and C446. One can recognise a BRCT domain in the interval 605-685 (ADAQPLKGQT…ELLALLAANA (81 aa)).

Belongs to the NAD-dependent DNA ligase family. LigA subfamily. The cofactor is Mg(2+). It depends on Mn(2+) as a cofactor.

It catalyses the reaction NAD(+) + (deoxyribonucleotide)n-3'-hydroxyl + 5'-phospho-(deoxyribonucleotide)m = (deoxyribonucleotide)n+m + AMP + beta-nicotinamide D-nucleotide.. DNA ligase that catalyzes the formation of phosphodiester linkages between 5'-phosphoryl and 3'-hydroxyl groups in double-stranded DNA using NAD as a coenzyme and as the energy source for the reaction. It is essential for DNA replication and repair of damaged DNA. The chain is DNA ligase from Shewanella baltica (strain OS195).